We begin with the raw amino-acid sequence, 20 residues long: L-amino-acid oxidase L2 (20 aa).

Belongs to the flavin monoamine oxidase family. FIG1 subfamily. In terms of assembly, monomer. This is in contrast with most of its orthologs, that are non-covalently linked homodimers. Requires FAD as cofactor. Post-translationally, N-glycosylated. As to expression, expressed by the venom gland.

Its subcellular location is the secreted. It catalyses the reaction an L-alpha-amino acid + O2 + H2O = a 2-oxocarboxylate + H2O2 + NH4(+). It carries out the reaction L-leucine + O2 + H2O = 4-methyl-2-oxopentanoate + H2O2 + NH4(+). The catalysed reaction is L-phenylalanine + O2 + H2O = 3-phenylpyruvate + H2O2 + NH4(+). The enzyme catalyses L-tryptophan + O2 + H2O = indole-3-pyruvate + H2O2 + NH4(+). It catalyses the reaction L-methionine + O2 + H2O = 4-methylsulfanyl-2-oxobutanoate + H2O2 + NH4(+). It carries out the reaction L-isoleucine + O2 + H2O = (S)-3-methyl-2-oxopentanoate + H2O2 + NH4(+). The catalysed reaction is L-tyrosine + O2 + H2O = 3-(4-hydroxyphenyl)pyruvate + H2O2 + NH4(+). Functionally, catalyzes an oxidative deamination of predominantly hydrophobic and aromatic L-amino acids, thus producing hydrogen peroxide that may contribute to the diverse toxic effects of this enzyme. Is active on L-Ile, L-Leu, L-Met, L-Phe, L-Trp, and L-Tyr. Exhibits diverse biological activities, such as hemorrhage, hemolysis, edema, apoptosis of vascular endothelial cells or tumor cell lines, antibacterial and antiparasitic activities, as well as regulation of platelet aggregation. Its effect on platelets is controversial, since it either induces aggregation or inhibits agonist-induced aggregation. These different effects are probably due to different experimental conditions. This chain is L-amino-acid oxidase L2, found in Daboia russelii (Russel's viper).